The sequence spans 469 residues: Glutamate--tRNA ligase 1 (469 aa).

A 'HIGH' region motif is present at residues 10–20; that stretch reads PSPTGYLHIGG. Zn(2+) contacts are provided by cysteine 99, cysteine 101, cysteine 126, and aspartate 128. Positions 237 to 241 match the 'KMSKS' region motif; it reads RLSKR. Position 240 (lysine 240) interacts with ATP.

Belongs to the class-I aminoacyl-tRNA synthetase family. Glutamate--tRNA ligase type 1 subfamily. Monomer. It depends on Zn(2+) as a cofactor.

Its subcellular location is the cytoplasm. The enzyme catalyses tRNA(Glu) + L-glutamate + ATP = L-glutamyl-tRNA(Glu) + AMP + diphosphate. Functionally, catalyzes the attachment of glutamate to tRNA(Glu) in a two-step reaction: glutamate is first activated by ATP to form Glu-AMP and then transferred to the acceptor end of tRNA(Glu). The polypeptide is Glutamate--tRNA ligase 1 (Coxiella burnetii (strain RSA 331 / Henzerling II)).